The following is a 359-amino-acid chain: Homeotic protein knotted-1 (359 aa).

Disordered regions lie at residues 1-34 (MEEITQHFGVGASSHGHGHGQHHHHHHHHHPWAS) and 213-232 (LSSGSSEEDQEGSGGETELP). Basic residues predominate over residues 16 to 31 (GHGHGQHHHHHHHHHP). The ELK domain maps to 242–262 (ELKHHLLKKYSGYLSSLKQEL). A DNA-binding region (homeobox; TALE-type) is located at residues 263–326 (SKKKKKGKLP…NQRKRHWKPS (64 aa)).

The protein belongs to the TALE/KNOX homeobox family. Forms homodimers. Binds to MBP2C; this interaction reduces RNA binding capacity. As to expression, expressed in apical meristems of vegetative and floral stems as well as in the underlying ground meristem. Specifically expressed in vascular bundles developing both in the leaf and stem. Very low levels of expression in leaves.

It localises to the nucleus. It is found in the cell junction. Its subcellular location is the plasmodesma. The protein resides in the cytoplasm. Functionally, binds to RNA. Possible transcription factor that regulates genes involved in development. Mutations in KN-1 alter leaf development. Foci of cells along the lateral vein do not differentiate properly but continue to divide, forming knots. May participate in the switch from indeterminate to determinate cell fates. Probably binds to the DNA sequence 5'-TGAC-3'. The sequence is that of Homeotic protein knotted-1 (KN-1) from Zea mays (Maize).